A 763-amino-acid polypeptide reads, in one-letter code: Actin filament-associated protein 1-like 1 (763 aa).

A disordered region spans residues 83 to 137; it reads LQDMPEDEAESCKAASPEPAKSPSLRHTADLPPPLPNRPPPEDYYEEALPLGPGK. Residues Ser98, Ser104, and Ser153 each carry the phosphoserine modification. The tract at residues 169 to 210 is disordered; that stretch reads TRMNGELKNSYNDSDAMSSSYESYDEEEEEGKGPQPTHQWPS. Residues 175–185 are compositionally biased toward polar residues; sequence LKNSYNDSDAM. Residues 220 to 316 enclose the PH 1 domain; it reads DCRICAFLLR…WLKVIREVSK (97 aa). Residues Ser329 and Ser343 each carry the phosphoserine modification. Residues 343 to 380 form a disordered region; sequence SQEKQTSDSDSLGMGDSCSTLGREHGKGKKSSLSELKG. In terms of domain architecture, PH 2 spans 413–507; sequence EVPCCGYLNV…WLGLLLVEMG (95 aa). Tyr552 carries the phosphotyrosine modification. The tract at residues 561-604 is disordered; the sequence is QDEEPERPPGAQVKRHASTCSEKSHRVDPQVKVKRHASSAHQYK. Over residues 582-591 the composition is skewed to basic and acidic residues; the sequence is EKSHRVDPQV. Residues 606–694 are a coiled coil; sequence GKNRAEEDAR…LVTVKERLQQ (89 aa). Residues 712–724 show a composition bias toward polar residues; it reads SGETANKPQNNVP. Residues 712–763 are disordered; sequence SGETANKPQNNVPEQPLPVNCVSELRKRSPSIINSNQGRVLQKAKEWEMKKT. Ser742 bears the Phosphoserine mark. The segment covering 754-763 has biased composition (basic and acidic residues); it reads KAKEWEMKKT.

Interacts with CTTN.

The protein localises to the cytoplasm. It is found in the cell projection. It localises to the podosome. Its subcellular location is the invadopodium. The protein resides in the cytoskeleton. The protein localises to the stress fiber. In terms of biological role, may be involved in podosome and invadosome formation. The chain is Actin filament-associated protein 1-like 1 (AFAP1L1) from Bos taurus (Bovine).